A 557-amino-acid polypeptide reads, in one-letter code: Dihydroxy-acid dehydratase (557 aa).

Residue C49 participates in [2Fe-2S] cluster binding. D81 is a binding site for Mg(2+). Residue C122 participates in [2Fe-2S] cluster binding. Residues D123 and K124 each coordinate Mg(2+). An N6-carboxylysine modification is found at K124. C194 lines the [2Fe-2S] cluster pocket. Position 446 (E446) interacts with Mg(2+). S472 acts as the Proton acceptor in catalysis.

It belongs to the IlvD/Edd family. In terms of assembly, homodimer. Requires [2Fe-2S] cluster as cofactor. Mg(2+) is required as a cofactor.

It catalyses the reaction (2R)-2,3-dihydroxy-3-methylbutanoate = 3-methyl-2-oxobutanoate + H2O. The enzyme catalyses (2R,3R)-2,3-dihydroxy-3-methylpentanoate = (S)-3-methyl-2-oxopentanoate + H2O. It participates in amino-acid biosynthesis; L-isoleucine biosynthesis; L-isoleucine from 2-oxobutanoate: step 3/4. The protein operates within amino-acid biosynthesis; L-valine biosynthesis; L-valine from pyruvate: step 3/4. Functionally, functions in the biosynthesis of branched-chain amino acids. Catalyzes the dehydration of (2R,3R)-2,3-dihydroxy-3-methylpentanoate (2,3-dihydroxy-3-methylvalerate) into 2-oxo-3-methylpentanoate (2-oxo-3-methylvalerate) and of (2R)-2,3-dihydroxy-3-methylbutanoate (2,3-dihydroxyisovalerate) into 2-oxo-3-methylbutanoate (2-oxoisovalerate), the penultimate precursor to L-isoleucine and L-valine, respectively. This Prochlorococcus marinus (strain AS9601) protein is Dihydroxy-acid dehydratase.